A 96-amino-acid chain; its full sequence is UPF0235 protein KPK_0722 (96 aa).

Belongs to the UPF0235 family.

The polypeptide is UPF0235 protein KPK_0722 (Klebsiella pneumoniae (strain 342)).